A 199-amino-acid chain; its full sequence is ATP-dependent Clp protease proteolytic subunit (199 aa).

Ser-97 serves as the catalytic Nucleophile. Residue His-122 is part of the active site.

The protein belongs to the peptidase S14 family. In terms of assembly, fourteen ClpP subunits assemble into 2 heptameric rings which stack back to back to give a disk-like structure with a central cavity, resembling the structure of eukaryotic proteasomes.

It localises to the cytoplasm. It catalyses the reaction Hydrolysis of proteins to small peptides in the presence of ATP and magnesium. alpha-casein is the usual test substrate. In the absence of ATP, only oligopeptides shorter than five residues are hydrolyzed (such as succinyl-Leu-Tyr-|-NHMec, and Leu-Tyr-Leu-|-Tyr-Trp, in which cleavage of the -Tyr-|-Leu- and -Tyr-|-Trp bonds also occurs).. Its function is as follows. Cleaves peptides in various proteins in a process that requires ATP hydrolysis. Has a chymotrypsin-like activity. Plays a major role in the degradation of misfolded proteins. This chain is ATP-dependent Clp protease proteolytic subunit, found in Citrifermentans bemidjiense (strain ATCC BAA-1014 / DSM 16622 / JCM 12645 / Bem) (Geobacter bemidjiensis).